A 429-amino-acid polypeptide reads, in one-letter code: BURP domain-containing protein 3 (429 aa).

Positions 1-21 (MDRLLACLLGFLLIASVGSHA) are cleaved as a signal peptide. A disordered region spans residues 59-81 (GGGVHVDAGHGKPGGTTVDVGKG). A BURP domain is found at 213-428 (FFLEKDLHPG…PQDHVVWTRS (216 aa)).

Expressed in stems, leaves, shoot, panicles and stamen.

The sequence is that of BURP domain-containing protein 3 (BURP3) from Oryza sativa subsp. japonica (Rice).